Here is a 224-residue protein sequence, read N- to C-terminus: uncharacterized protein (224 aa).

It localises to the virion. This is an uncharacterized protein from Acanthamoeba polyphaga mimivirus (APMV).